The primary structure comprises 2178 residues: MGAQVSTQKSGSHENQNILTNGSNQTFTVINYYKDAASSSSAGQSFSMDPSKFTEPVKDLMLKGAPALNSPNVEACGYSDRVQQITLGNSTITTQEAANAIVCYAEWPEYLSDNDASDVNKTSKPDISVCRFYTLDSKTWKATSKGWCWKLPDALKDMGVFGQNMFYHSLGRTGYTIHVQCNATKFHSGCLLVVVIPEHQLASHEGGTVSVKYKYTHPGDRGIDLDTVEVAGGPTSDAIYNMDGTLLGNLLIFPHQFINLRTNNTATIVVPYINSVPIDSMTRHNNVSLMVVPIAPLNAPTGSSPTLPVTVTIAPMCTEFTGIRSRSIVPQGLPTTTLPGSGQFLTTDDRQSPSALPSYEPTPRIHIPGKVRNLLEIIQVGTLIPMNNTGTNDNVTNYLIPLHADRQNEQIFGTKLYIGDGVFKTTLLGEIAQYYTHWSGSLRISLMYTGPALSSAKIILAYTPPGTRGPEDRKEAMLGTHVVWDIGLQSTIVMTIPWTSGVQFRYTDPDTYTSAGYLSCWYQTSLILPPQTSGQVYLLSFISACPDFKLRLMKDTQTISQTDALTEGLSDELEEVIVEKTKQTLASVSSGPKHTQSVPALTANETGATLPTRPSDNVETRTTYMHFNGSETDVESFLGRAACVHVTEIKNKNAAGLDNHRKEGLFNDWKINLSSLVQLRKKLELFTYVRFDSEYTILATASQPEASSYSSNLTVQAMYVPPGAPNPKEWDDYTWQSASNPSVFFKVGETSRFSVPFVGIASAYNCFYDGYSHDDPDTPYGITVLNHMGSMAFRVVNEHDVHTTIVKIRVYHRAKHVEAWIPRAPRALPYVSIGRTNYPRDSKTIIKKRTNIKTYGLGPRFGGVFTSNVKIINYHLMTPDDHLNLVAPYPNRDLAVVATGAHGAETIPHCNCTSGVYYSRYYRKFYPIICERPTNIWIEGSSYYPSRYQAGVMKGVGPAEPGDCGGILRCIHGPIGLLTAGGGGYVCFADIRQLDFIADEQGLGDYITSLGRAFGTGFTDQISAKVCELQDVAKDFLTTKVLSKVVKMISALVIICRNHDDLVTVTATLALLGCDGSPWRFLKMYISKHFQVPYIERQANDGWFRKFNDACNAAKGLEWIANKISKLIEWIKNKVLPQAREKLEFCSKLKQLDILERQIASIHDSNPTQEKREQLFNNVLWLEQMSQKFSPLYASEAKRIRDLKNKITNYMQFKSKQRTEPVCVLIHGTPGSGKSLTTSIVGRALAEHFNSSVYSLPPDPKHFDGYQQQEVVIMDDLNQNPDGQDISMFCQMVSSVDFLPPMASLDNKGMLFTSNFVLASTNSNTLSPPTILNPEALIRRFGFDLDICMHSTYTKNGKLNAAMATSLCKDCHQPSNFKKCCPLVCGKAISLVDRVSNVRFSIDQLVTAIINDYKNKVKITDSLEVLFQGPVYKDLEIDICNTPPPECISDLLKSVDSEEVREYCKKKKWIIPQISTNIERAVNQASMIINTILMFVSTLGIVYVIYKLFAQTQGPYSGNPVHNKLKPPTLKPVVVQGPNTEFALSLLRKNILTITTEKGEFTSLGIHDRICVLPTHAQPGDNVLVNGQKIQIKDKYKLVDPDNTNLELTIIELDRNEKFRDIRGFISEDLEGLDATLVVHSNGFTNTILDVGPITMAGLINLSNTPTTRMIRYDYPTKTGQCGGVLCTTGKIFGIHVGGNGRRGFSAQLKKQYFVEKQGLIVSKQKVRDIGLNPINTPTKTKLHPSVFYNVFPGSKQPAVLNDNDPRLEVKLAESLFSKYKGNVQMEPTENMLIAVDHYAGQLMSLDISTKELTLKEALYGVDGLEPIDVTTSAGYPYVSLGIKKRDILNKETQDVEKMKFYLDKYGIDLPLVTYIKDELRSVDKVRLGKSRLIEASSLNDSVNMRMKLGNLYKAFHQNPGIITESAVGCDPDVFWSVIPCLMDGHLMAFDYSNFDASLSPVWFECLEKVLNKLGFKQPSLIQSICNTHHIFRDEIYRVEGGMPSGCSGTSIFNSMINNIIIRTLILDAYKGIDLDSLRILAYGDDLIVSYPFELDSNILAAIGKNYGLTITPPDKSDAFTKITWENITFLKRYFRPDPQFPFLIHPVMPMQDIYESIRWTRDPRNTQDHVRSLCMLAWHSGEKDYNDFITKIRTTDIGKCLNLPEYSVLRRRWLDLF.

The interval methionine 1–threonine 20 is disordered. The N-myristoyl glycine; by host moiety is linked to residue glycine 2. At glycine 2–asparagine 1490 the chain is on the cytoplasmic side. The amphipathic alpha-helix stretch occupies residues alanine 564–threonine 584. Residues histidine 875 and aspartate 893 each act as for protease 2A activity in the active site. Residues cysteine 910 and cysteine 912 each coordinate Zn(2+). Residue cysteine 964 is the For protease 2A activity of the active site. Zn(2+)-binding residues include cysteine 970 and histidine 972. The segment at asparagine 1100 to arginine 1172 is membrane-binding. The interval asparagine 1100–threonine 1238 is oligomerization. Residues alanine 1121–serine 1125 are RNA-binding. Residues lysine 1204 to asparagine 1360 enclose the SF3 helicase domain. Residues cysteine 1368, cysteine 1371, cysteine 1380, and cysteine 1385 each contribute to the Zn(2+) site. A C4-type zinc finger spans residues cysteine 1368–cysteine 1385. The segment at aspartate 1412–isoleucine 1419 is RNA-binding. An oligomerization region spans residues leucine 1423–glutamine 1428. The stretch at threonine 1491–tyrosine 1506 is an intramembrane region. Residues lysine 1507–phenylalanine 2178 are Cytoplasmic-facing. At tyrosine 1516 the chain carries O-(5'-phospho-RNA)-tyrosine. The Peptidase C3 domain occupies glycine 1537–phenylalanine 1714. Catalysis depends on for protease 3C activity residues histidine 1576, glutamate 1607, and cysteine 1682. Residues histidine 1946–isoleucine 2059 form the RdRp catalytic domain. Mg(2+) contacts are provided by aspartate 1951 and aspartate 2045.

The protein belongs to the picornaviruses polyprotein family. In terms of assembly, interacts with capsid protein VP1 and capsid protein VP3 to form heterotrimeric protomers. Interacts with capsid protein VP0, and capsid protein VP3 to form heterotrimeric protomers. Five protomers subsequently associate to form pentamers which serve as building blocks for the capsid. Interacts with capsid protein VP2, capsid protein VP3 and capsid protein VP4 following cleavage of capsid protein VP0. As to quaternary structure, interacts with capsid protein VP1 and capsid protein VP3 in the mature capsid. In terms of assembly, interacts with capsid protein VP0 and capsid protein VP1 to form heterotrimeric protomers. Five protomers subsequently associate to form pentamers which serve as building blocks for the capsid. Interacts with capsid protein VP4 in the mature capsid. Interacts with protein 2C; this interaction may be important for virion morphogenesis. Interacts with capsid protein VP1 and capsid protein VP3. As to quaternary structure, homodimer. In terms of assembly, homohexamer; forms a hexameric ring structure with 6-fold symmetry characteristic of AAA+ ATPases. Interacts (via N-terminus) with host RTN3 (via reticulon domain); this interaction is important for viral replication. Interacts with capsid protein VP3; this interaction may be important for virion morphogenesis. Interacts with protein 3CD. As to quaternary structure, homodimer. Interacts with host GBF1. Interacts (via GOLD domain) with host ACBD3 (via GOLD domain); this interaction allows the formation of a viral protein 3A/ACBD3 heterotetramer with a 2:2 stoichiometry, which will stimulate the recruitment of host PI4KB in order to synthesize PI4P at the viral RNA replication sites. In terms of assembly, interacts with RNA-directed RNA polymerase. Interacts with protein 3AB and with RNA-directed RNA polymerase. As to quaternary structure, interacts with Viral protein genome-linked and with protein 3CD. The cofactor is Mg(2+). In terms of processing, specific enzymatic cleavages in vivo by the viral proteases yield processing intermediates and the mature proteins. Myristoylation is required for the formation of pentamers during virus assembly. Further assembly of 12 pentamers and a molecule of genomic RNA generates the provirion. Post-translationally, during virion maturation, immature virions are rendered infectious following cleavage of VP0 into VP4 and VP2. This maturation seems to be an autocatalytic event triggered by the presence of RNA in the capsid and it is followed by a conformational change infectious virion. In terms of processing, myristoylation is required during RNA encapsidation and formation of the mature virus particle. VPg is uridylylated by the polymerase into VPg-pUpU. This acts as a nucleotide-peptide primer for the genomic RNA replication.

The protein localises to the virion. It is found in the host cytoplasm. It localises to the host cytoplasmic vesicle membrane. The protein resides in the host nucleus. It catalyses the reaction a ribonucleoside 5'-triphosphate + H2O = a ribonucleoside 5'-diphosphate + phosphate + H(+). It carries out the reaction Selective cleavage of Tyr-|-Gly bond in the picornavirus polyprotein.. The enzyme catalyses RNA(n) + a ribonucleoside 5'-triphosphate = RNA(n+1) + diphosphate. The catalysed reaction is Selective cleavage of Gln-|-Gly bond in the poliovirus polyprotein. In other picornavirus reactions Glu may be substituted for Gln, and Ser or Thr for Gly.. With respect to regulation, replication or transcription is subject to high level of random mutations by the nucleotide analog ribavirin. Forms an icosahedral capsid of pseudo T=3 symmetry with capsid proteins VP2 and VP3. The capsid is 300 Angstroms in diameter, composed of 60 copies of each capsid protein and enclosing the viral positive strand RNA genome. Capsid protein VP1 mainly forms the vertices of the capsid. Capsid protein VP1 interacts with host cell receptor to provide virion attachment to target host cells. This attachment induces virion internalization. Tyrosine kinases are probably involved in the entry process. After binding to its receptor, the capsid undergoes conformational changes. Capsid protein VP1 N-terminus (that contains an amphipathic alpha-helix) and capsid protein VP4 are externalized. Together, they shape a pore in the host membrane through which viral genome is translocated to host cell cytoplasm. Functionally, forms an icosahedral capsid of pseudo T=3 symmetry with capsid proteins VP2 and VP3. The capsid is 300 Angstroms in diameter, composed of 60 copies of each capsid protein and enclosing the viral positive strand RNA genome. Its function is as follows. Lies on the inner surface of the capsid shell. After binding to the host receptor, the capsid undergoes conformational changes. Capsid protein VP4 is released, Capsid protein VP1 N-terminus is externalized, and together, they shape a pore in the host membrane through which the viral genome is translocated into the host cell cytoplasm. In terms of biological role, component of immature procapsids, which is cleaved into capsid proteins VP4 and VP2 after maturation. Allows the capsid to remain inactive before the maturation step. Cysteine protease that cleaves viral polyprotein and specific host proteins. It is responsible for the autocatalytic cleavage between the P1 and P2 regions, which is the first cleavage occurring in the polyprotein. Also cleaves the host translation initiation factor EIF4G1, in order to shut down the capped cellular mRNA translation. Inhibits the host nucleus-cytoplasm protein and RNA trafficking by cleaving host members of the nuclear pores. Counteracts stress granule formation probably by antagonizing its assembly or promoting its dissassembly. Functionally, plays an essential role in the virus replication cycle by acting as a viroporin. Creates a pore in the host endoplasmic reticulum and as a consequence releases Ca2+ in the cytoplasm of infected cell. In turn, high levels of cytoplasmic calcium may trigger membrane trafficking and transport of viral ER-associated proteins to viroplasms, sites of viral genome replication. Its function is as follows. Induces and associates with structural rearrangements of intracellular membranes. Displays RNA-binding, nucleotide binding and NTPase activities. May play a role in virion morphogenesis and viral RNA encapsidation by interacting with the capsid protein VP3. In terms of biological role, localizes the viral replication complex to the surface of membranous vesicles. Together with protein 3CD binds the Cis-Active RNA Element (CRE) which is involved in RNA synthesis initiation. Acts as a cofactor to stimulate the activity of 3D polymerase, maybe through a nucleid acid chaperone activity. Localizes the viral replication complex to the surface of membranous vesicles. It inhibits host cell endoplasmic reticulum-to-Golgi apparatus transport and causes the disassembly of the Golgi complex, possibly through GBF1 interaction. This would result in depletion of MHC, trail receptors and IFN receptors at the host cell surface. Plays an essential role in viral RNA replication by recruiting ACBD3 and PI4KB at the viral replication sites, thereby allowing the formation of the rearranged membranous structures where viral replication takes place. Functionally, acts as a primer for viral RNA replication and remains covalently bound to viral genomic RNA. VPg is uridylylated prior to priming replication into VPg-pUpU. The oriI viral genomic sequence may act as a template for this. The VPg-pUpU is then used as primer on the genomic RNA poly(A) by the RNA-dependent RNA polymerase to replicate the viral genome. During genome replication, the VPg-RNA linkage is removed by the host TDP2, thereby accelerating replication. During the late stage of the replication cycle, host TDP2 is excluded from sites of viral RNA synthesis and encapsidation, allowing for the generation of progeny virions. Its function is as follows. Involved in the viral replication complex and viral polypeptide maturation. It exhibits protease activity with a specificity and catalytic efficiency that is different from protease 3C. Protein 3CD lacks polymerase activity. Protein 3CD binds to the 5'UTR of the viral genome. In terms of biological role, replicates the viral genomic RNA on the surface of intracellular membranes. May form linear arrays of subunits that propagate along a strong head-to-tail interaction called interface-I. Covalently attaches UMP to a tyrosine of VPg, which is used to prime RNA synthesis. The positive stranded RNA genome is first replicated at virus induced membranous vesicles, creating a dsRNA genomic replication form. This dsRNA is then used as template to synthesize positive stranded RNA genomes. ss(+)RNA genomes are either translated, replicated or encapsidated. Major viral protease that mediates proteolytic processing of the polyprotein. Cleaves host EIF5B, contributing to host translation shutoff. Also cleaves host PABPC1, contributing to host translation shutoff. Cleaves host NLRP1, triggers host N-glycine-mediated degradation of the autoinhibitory NLRP1 N-terminal fragment. The protein is Genome polyprotein of Homo sapiens (Human).